A 196-amino-acid chain; its full sequence is Imidazoleglycerol-phosphate dehydratase (196 aa).

The protein belongs to the imidazoleglycerol-phosphate dehydratase family.

It is found in the cytoplasm. The catalysed reaction is D-erythro-1-(imidazol-4-yl)glycerol 3-phosphate = 3-(imidazol-4-yl)-2-oxopropyl phosphate + H2O. It participates in amino-acid biosynthesis; L-histidine biosynthesis; L-histidine from 5-phospho-alpha-D-ribose 1-diphosphate: step 6/9. The polypeptide is Imidazoleglycerol-phosphate dehydratase (Caulobacter sp. (strain K31)).